Consider the following 521-residue polypeptide: Cytochrome P450 1A1 (521 aa).

A substrate-binding site is contributed by phenylalanine 229. A heme-binding site is contributed by cysteine 463.

It belongs to the cytochrome P450 family. Heme serves as cofactor.

The protein localises to the endoplasmic reticulum membrane. It is found in the microsome membrane. The enzyme catalyses an organic molecule + reduced [NADPH--hemoprotein reductase] + O2 = an alcohol + oxidized [NADPH--hemoprotein reductase] + H2O + H(+). In terms of biological role, cytochromes P450 are a group of heme-thiolate monooxygenases. They oxidize a variety of structurally unrelated compounds, including steroids, fatty acids, and xenobiotics. The sequence is that of Cytochrome P450 1A1 (cyp1a1) from Pleuronectes platessa (European plaice).